Consider the following 175-residue polypeptide: Ribosome-binding factor A (175 aa).

Positions 131–175 (KPAGEADPYRDRGSVDEPSDAGGLVIRTSDGLEAENTGDDYQAED) are disordered. Positions 162-175 (LEAENTGDDYQAED) are enriched in acidic residues.

Belongs to the RbfA family. Monomer. Binds 30S ribosomal subunits, but not 50S ribosomal subunits or 70S ribosomes.

It localises to the cytoplasm. Its function is as follows. One of several proteins that assist in the late maturation steps of the functional core of the 30S ribosomal subunit. Associates with free 30S ribosomal subunits (but not with 30S subunits that are part of 70S ribosomes or polysomes). Required for efficient processing of 16S rRNA. May interact with the 5'-terminal helix region of 16S rRNA. The sequence is that of Ribosome-binding factor A from Mycobacterium ulcerans (strain Agy99).